A 67-amino-acid polypeptide reads, in one-letter code: Prokaryotic ubiquitin-like protein Pup (67 aa).

Residues 1–13 (MAGQEQQQPQSRD) are compositionally biased toward low complexity. The segment at 1–48 (MAGQEQQQPQSRDSQVDEDIPEAPPAPPEAQASASTEGVDDLLDEIDG) is disordered. The interval 25–61 (PAPPEAQASASTEGVDDLLDEIDGVLESNAEEFVRAF) is ARC ATPase binding. The segment covering 38 to 48 (GVDDLLDEIDG) has biased composition (acidic residues). Glutamine 67 bears the Deamidated glutamine mark. Glutamine 67 is covalently cross-linked (Isoglutamyl lysine isopeptide (Gln-Lys) (interchain with K-? in acceptor proteins)).

The protein belongs to the prokaryotic ubiquitin-like protein family. As to quaternary structure, strongly interacts with the proteasome-associated ATPase ARC through a hydrophobic interface; the interacting region of Pup lies in its C-terminal half. There is one Pup binding site per ARC hexamer ring. Post-translationally, is modified by deamidation of its C-terminal glutamine to glutamate by the deamidase Dop, a prerequisite to the subsequent pupylation process.

Its pathway is protein degradation; proteasomal Pup-dependent pathway. Its function is as follows. Protein modifier that is covalently attached to lysine residues of substrate proteins, thereby targeting them for proteasomal degradation. The tagging system is termed pupylation. The polypeptide is Prokaryotic ubiquitin-like protein Pup (Pseudarthrobacter chlorophenolicus (strain ATCC 700700 / DSM 12829 / CIP 107037 / JCM 12360 / KCTC 9906 / NCIMB 13794 / A6) (Arthrobacter chlorophenolicus)).